We begin with the raw amino-acid sequence, 187 residues long: UPF0301 protein LPC_2717 (187 aa).

This sequence belongs to the UPF0301 (AlgH) family.

This chain is UPF0301 protein LPC_2717, found in Legionella pneumophila (strain Corby).